Here is a 467-residue protein sequence, read N- to C-terminus: ATP synthase subunit beta (467 aa).

Residue 150–157 (GGAGVGKT) participates in ATP binding.

This sequence belongs to the ATPase alpha/beta chains family. As to quaternary structure, F-type ATPases have 2 components, CF(1) - the catalytic core - and CF(0) - the membrane proton channel. CF(1) has five subunits: alpha(3), beta(3), gamma(1), delta(1), epsilon(1). CF(0) has three main subunits: a(1), b(2) and c(9-12). The alpha and beta chains form an alternating ring which encloses part of the gamma chain. CF(1) is attached to CF(0) by a central stalk formed by the gamma and epsilon chains, while a peripheral stalk is formed by the delta and b chains.

The protein resides in the cell inner membrane. The enzyme catalyses ATP + H2O + 4 H(+)(in) = ADP + phosphate + 5 H(+)(out). Its function is as follows. Produces ATP from ADP in the presence of a proton gradient across the membrane. The catalytic sites are hosted primarily by the beta subunits. This chain is ATP synthase subunit beta, found in Vibrio vulnificus (strain YJ016).